The sequence spans 232 residues: AA9 family lytic polysaccharide monooxygenase C (232 aa).

The first 19 residues, M1–A19, serve as a signal peptide directing secretion. The Cu(2+) site is built by H20 and H91. C61 and C180 are oxidised to a cystine. Residues H166 and Q175 each coordinate O2. Residue Y177 participates in Cu(2+) binding. N184 carries an N-linked (GlcNAc...) asparagine glycan.

This sequence belongs to the polysaccharide monooxygenase AA9 family. The cofactor is Cu(2+).

Its subcellular location is the secreted. It catalyses the reaction [(1-&gt;4)-beta-D-glucosyl]n+m + reduced acceptor + O2 = 4-dehydro-beta-D-glucosyl-[(1-&gt;4)-beta-D-glucosyl]n-1 + [(1-&gt;4)-beta-D-glucosyl]m + acceptor + H2O.. Functionally, lytic polysaccharide monooxygenase (LPMO) that depolymerizes crystalline and amorphous polysaccharides via the oxidation of scissile alpha- or beta-(1-4)-glycosidic bonds, yielding C1 or C4 oxidation products. Catalysis by LPMOs requires the reduction of the active-site copper from Cu(II) to Cu(I) by a reducing agent and H(2)O(2) or O(2) as a cosubstrate. The sequence is that of AA9 family lytic polysaccharide monooxygenase C from Malbranchea cinnamomea (Thermophilic fungus).